The following is a 297-amino-acid chain: 4-hydroxy-tetrahydrodipicolinate synthase (297 aa).

Thr-46 is a pyruvate binding site. Residue Tyr-134 is the Proton donor/acceptor of the active site. Lys-162 acts as the Schiff-base intermediate with substrate in catalysis. Ile-204 is a pyruvate binding site.

This sequence belongs to the DapA family. In terms of assembly, homotetramer; dimer of dimers.

The protein resides in the cytoplasm. The catalysed reaction is L-aspartate 4-semialdehyde + pyruvate = (2S,4S)-4-hydroxy-2,3,4,5-tetrahydrodipicolinate + H2O + H(+). It participates in amino-acid biosynthesis; L-lysine biosynthesis via DAP pathway; (S)-tetrahydrodipicolinate from L-aspartate: step 3/4. Catalyzes the condensation of (S)-aspartate-beta-semialdehyde [(S)-ASA] and pyruvate to 4-hydroxy-tetrahydrodipicolinate (HTPA). This Stenotrophomonas maltophilia (strain R551-3) protein is 4-hydroxy-tetrahydrodipicolinate synthase.